A 299-amino-acid polypeptide reads, in one-letter code: Bifunctional protein FolD (299 aa).

NADP(+) is bound by residues 166–168, serine 191, and isoleucine 232; that span reads GRS.

This sequence belongs to the tetrahydrofolate dehydrogenase/cyclohydrolase family. In terms of assembly, homodimer.

The catalysed reaction is (6R)-5,10-methylene-5,6,7,8-tetrahydrofolate + NADP(+) = (6R)-5,10-methenyltetrahydrofolate + NADPH. The enzyme catalyses (6R)-5,10-methenyltetrahydrofolate + H2O = (6R)-10-formyltetrahydrofolate + H(+). The protein operates within one-carbon metabolism; tetrahydrofolate interconversion. Its function is as follows. Catalyzes the oxidation of 5,10-methylenetetrahydrofolate to 5,10-methenyltetrahydrofolate and then the hydrolysis of 5,10-methenyltetrahydrofolate to 10-formyltetrahydrofolate. In Dinoroseobacter shibae (strain DSM 16493 / NCIMB 14021 / DFL 12), this protein is Bifunctional protein FolD.